The primary structure comprises 189 residues: EFLFARTMIGVFKNIEYMCNRTSSKTWGKEAWKKIVVCIVSDRRAKINPRTRAVLAGLGVYQDGIAKQQVNGKDVTAHIYEYTTQVGLELKGTQVSLKPRSATPVQLLFCLKEKNQKKINSHRWFFQAFGRVLDPNICVLIDAGTKPGKDSIYQLWKAFDLEPMCGGACGEIKVMLDHGKKLYNPLIAT.

It belongs to the chitin synthase family. Class I subfamily.

It is found in the cell membrane. The catalysed reaction is [(1-&gt;4)-N-acetyl-beta-D-glucosaminyl](n) + UDP-N-acetyl-alpha-D-glucosamine = [(1-&gt;4)-N-acetyl-beta-D-glucosaminyl](n+1) + UDP + H(+). In terms of biological role, polymerizes chitin, a structural polymer of the cell wall and septum, by transferring the sugar moiety of UDP-GlcNAc to the non-reducing end of the growing chitin polymer. In Rhinocladiella atrovirens, this protein is Chitin synthase 1 (CHS1).